A 919-amino-acid chain; its full sequence is Transcriptional regulatory protein EDS1 (919 aa).

Positions 1–54 are disordered; the sequence is MSHHVPNLYGTPIRDPHERKRNSASMGEVNQSVSSRNCERGSEKGTKQRKKASR. The segment covering 23–36 has biased composition (polar residues); sequence SASMGEVNQSVSSR. Basic and acidic residues predominate over residues 37–46; sequence NCERGSEKGT. The zn(2)-C6 fungal-type DNA-binding region spans 56-85; sequence CDQCRRKRIKCRFDKHTGVCQGCLEVGEKC. The tract at residues 297–338 is disordered; sequence AGCPNKKLGTDGRSDKWDKNSTWKPVYRSSNPSHPSTEKNVS. Residues 304-317 show a composition bias toward basic and acidic residues; that stretch reads LGTDGRSDKWDKNS. Positions 318–338 are enriched in polar residues; sequence TWKPVYRSSNPSHPSTEKNVS.

In terms of assembly, binds DNA in a sequence-specific manner.

It is found in the nucleus. The protein is Transcriptional regulatory protein EDS1 (EDS1) of Saccharomyces cerevisiae (strain RM11-1a) (Baker's yeast).